The chain runs to 415 residues: Esterase FrsA (415 aa).

This sequence belongs to the FrsA family. Monomer in solution. Homodimer. Forms a 1:1 complex with the unphosphorylated form of the EIIA component of the glucose-specific PTS system (IIAGlc).

The catalysed reaction is a carboxylic ester + H2O = an alcohol + a carboxylate + H(+). Functionally, catalyzes the hydrolysis of esters. In vitro, prefers short chain alkanoate ester as substrate. Displays highest activity towards p-nitrophenyl acetate (pNPA). Has weaker activity towards p-nitrophenyl butyrate (pNPB). This is Esterase FrsA from Vibrio vulnificus (strain CMCP6).